We begin with the raw amino-acid sequence, 80 residues long: MSRKTTVRHFEENLSELDTLVTQLESNQLSLEEALKAFEKGVKLSQECQSVLTQAEQKVQILLEKQDGEHLETFDPELNS.

The protein belongs to the XseB family. In terms of assembly, heterooligomer composed of large and small subunits.

Its subcellular location is the cytoplasm. The enzyme catalyses Exonucleolytic cleavage in either 5'- to 3'- or 3'- to 5'-direction to yield nucleoside 5'-phosphates.. In terms of biological role, bidirectionally degrades single-stranded DNA into large acid-insoluble oligonucleotides, which are then degraded further into small acid-soluble oligonucleotides. This chain is Exodeoxyribonuclease 7 small subunit, found in Marinomonas sp. (strain MWYL1).